The chain runs to 172 residues: Protein-export protein SecB (172 aa).

The protein belongs to the SecB family. Homotetramer, a dimer of dimers. One homotetramer interacts with 1 SecA dimer.

The protein resides in the cytoplasm. In terms of biological role, one of the proteins required for the normal export of preproteins out of the cell cytoplasm. It is a molecular chaperone that binds to a subset of precursor proteins, maintaining them in a translocation-competent state. It also specifically binds to its receptor SecA. This Dinoroseobacter shibae (strain DSM 16493 / NCIMB 14021 / DFL 12) protein is Protein-export protein SecB.